A 1577-amino-acid chain; its full sequence is Dynamin-binding protein (1577 aa).

The residue at position 1 (methionine 1) is an N-acetylmethionine. 4 SH3 domains span residues 2 to 61 (EAGS…IVTI), 66 to 126 (EGER…ELCL), 145 to 204 (YSMG…LLGP), and 243 to 302 (EPGT…LCPD). 2 disordered regions span residues 211–244 (SVSSGNQDDCIVNGEVDTPVGEEEIGPDEDEEEP) and 335–395 (EEQR…WEMP). Acidic residues predominate over residues 230–244 (VGEEEIGPDEDEEEP). Basic and acidic residues predominate over residues 335 to 344 (EEQRHETSDH). At serine 496 the chain carries Phosphoserine. Disordered regions lie at residues 591–624 (GSSKLITEQELPERRKALRPPPPRPCTPVSTSPH) and 639–659 (VRPSRPAPLPPSAQQRTNAVS). A compositionally biased stretch (pro residues) spans 639 to 649 (VRPSRPAPLPP). Serine 684 is subject to Phosphoserine. Positions 693 to 757 (LVLVRIEEME…ELQQLREMTL (65 aa)) form a coiled coil. The 184-residue stretch at 784–967 (KRAKVIEELL…KEINVNINEY (184 aa)) folds into the DH domain. One can recognise a BAR domain in the interval 1008–1217 (LKHLTGFAPQ…LKVAGREGNL (210 aa)). Residues 1136-1173 (ERAEKLKDKKTLEELQSARNNYEALNAQLLDELPKFHQ) are a coiled coil. The 64-residue stretch at 1285–1348 (PPEKLFQAER…YSSFLKPYNP (64 aa)) folds into the SH3 5 domain. The disordered stretch occupies residues 1348–1487 (PRRSHSDASV…SVPGRNGQSQ (140 aa)). The segment covering 1376–1405 (RQNSGSTLTFNPSSMAVSFTSGSCQKQPQD) has biased composition (polar residues). A compositionally biased stretch (low complexity) spans 1419–1442 (SASLNPSNSESSPSRCPSDPDSTS). The SH3 6 domain maps to 1513-1576 (EGNQVYFAVY…PSNYIRKTEY (64 aa)).

In terms of assembly, binds DNM1 via its N-terminal SH3 domains. The C-terminal SH3 domain binds a complex containing actin, tubulin, Hsp70 and actin-regulatory proteins, such as ENAH, EVL, WIRE, CR16, WAVE1 and NAP1L1. Interacts with FASLG. Interacts (via SH3 domain 6) with WASL. Interacts (via SH3 domain 6) interacts with ENAH. Interacts (via C-terminal domain) with TJP1; required for the apical cell-cell junction localization of DNMBP. (Microbial infection) Interacts (via SH3 domain 6) with L.monocytogenes InlC. In terms of tissue distribution, detected in heart, brain, lung, liver, skeletal muscle, kidney and pancreas.

Its subcellular location is the cytoplasm. The protein localises to the golgi apparatus. It is found in the golgi stack. The protein resides in the cytoskeleton. It localises to the synapse. Its subcellular location is the cell junction. In terms of biological role, plays a critical role as a guanine nucleotide exchange factor (GEF) for CDC42 in several intracellular processes associated with the actin and microtubule cytoskeleton. Regulates the structure of apical junctions through F-actin organization in epithelial cells. Participates in the normal lumenogenesis of epithelial cell cysts by regulating spindle orientation. Plays a role in ciliogenesis. May play a role in membrane trafficking between the cell surface and the Golgi. The sequence is that of Dynamin-binding protein from Homo sapiens (Human).